A 207-amino-acid polypeptide reads, in one-letter code: ATP synthase subunit b 2 (207 aa).

The span at Met-1–Gly-31 shows a compositional bias: low complexity. A disordered region spans residues Met-1–Ser-41. A helical membrane pass occupies residues Ala-48–Ser-70.

Belongs to the ATPase B chain family. In terms of assembly, F-type ATPases have 2 components, F(1) - the catalytic core - and F(0) - the membrane proton channel. F(1) has five subunits: alpha(3), beta(3), gamma(1), delta(1), epsilon(1). F(0) has three main subunits: a(1), b(2) and c(10-14). The alpha and beta chains form an alternating ring which encloses part of the gamma chain. F(1) is attached to F(0) by a central stalk formed by the gamma and epsilon chains, while a peripheral stalk is formed by the delta and b chains.

The protein localises to the cell inner membrane. In terms of biological role, f(1)F(0) ATP synthase produces ATP from ADP in the presence of a proton or sodium gradient. F-type ATPases consist of two structural domains, F(1) containing the extramembraneous catalytic core and F(0) containing the membrane proton channel, linked together by a central stalk and a peripheral stalk. During catalysis, ATP synthesis in the catalytic domain of F(1) is coupled via a rotary mechanism of the central stalk subunits to proton translocation. Component of the F(0) channel, it forms part of the peripheral stalk, linking F(1) to F(0). The protein is ATP synthase subunit b 2 of Xanthobacter autotrophicus (strain ATCC BAA-1158 / Py2).